Reading from the N-terminus, the 183-residue chain is Bifunctional protein PyrR (183 aa).

A PRPP-binding motif is present at residues 102-114 (VVLVDDVLYTGRT).

Belongs to the purine/pyrimidine phosphoribosyltransferase family. PyrR subfamily. In terms of assembly, homodimer and homohexamer; in equilibrium.

It catalyses the reaction UMP + diphosphate = 5-phospho-alpha-D-ribose 1-diphosphate + uracil. Functionally, regulates transcriptional attenuation of the pyrimidine nucleotide (pyr) operon by binding in a uridine-dependent manner to specific sites on pyr mRNA. This disrupts an antiterminator hairpin in the RNA and favors formation of a downstream transcription terminator, leading to a reduced expression of downstream genes. In terms of biological role, also displays a weak uracil phosphoribosyltransferase activity which is not physiologically significant. The protein is Bifunctional protein PyrR of Listeria welshimeri serovar 6b (strain ATCC 35897 / DSM 20650 / CCUG 15529 / CIP 8149 / NCTC 11857 / SLCC 5334 / V8).